A 31-amino-acid polypeptide reads, in one-letter code: uncharacterized protein (31 aa).

Residues 1-31 (MKKLERMSEVSQMCSEAKKNRKRMSVVSSVA) form a disordered region.

This is an uncharacterized protein from Sulfolobus islandicus filamentous virus (isolate Iceland/Hveragerdi) (SIFV).